The chain runs to 587 residues: Pyruvate kinase (587 aa).

Arg33 provides a ligand contact to substrate. Positions 35, 37, 67, and 68 each coordinate K(+). Asn35–His38 is an ATP binding site. Residues Arg74 and Lys157 each contribute to the ATP site. Lys221 lines the substrate pocket. Position 223 (Glu223) interacts with Mg(2+). Positions 246, 247, and 279 each coordinate substrate. Mg(2+) is bound at residue Asp247.

This sequence belongs to the pyruvate kinase family. It in the C-terminal section; belongs to the PEP-utilizing enzyme family. In terms of assembly, homotetramer. The cofactor is Mg(2+). K(+) is required as a cofactor. The N-terminus is blocked.

The catalysed reaction is pyruvate + ATP = phosphoenolpyruvate + ADP + H(+). It participates in carbohydrate degradation; glycolysis; pyruvate from D-glyceraldehyde 3-phosphate: step 5/5. Exhibits homotropic positive cooperativity for PEP. Allosterically activated by ribose-5-phosphate, AMP and other nucleoside monophosphates but not by fructose-1,6-bisphosphate. Its function is as follows. Catalyzes the phosphoryl transfer from phosphoenolpyruvate (PEP) to ADP to form pyruvate and ATP. Has a broad specificity for nucleoside diphosphates and can use ADP, GDP, IDP and UDP. The polypeptide is Pyruvate kinase (pyk) (Geobacillus stearothermophilus (Bacillus stearothermophilus)).